A 101-amino-acid chain; its full sequence is uncharacterized protein (101 aa).

3 helical membrane passes run 10–32, 45–67, and 77–99; these read FLPN…FFLY, LGIW…LPLI, and IAFT…ILSH.

The protein localises to the cell membrane. This is an uncharacterized protein from Bacillus subtilis (strain 168).